A 533-amino-acid polypeptide reads, in one-letter code: Acid-sensing ion channel 3 (533 aa).

Topologically, residues 1–19 (MKPRSGLEEAQRRQASDIR) are cytoplasmic. The helical transmembrane segment at 20 to 40 (VFASSCTMHGLGHIFGPGGLT) threads the bilayer. Thr40 is subject to Phosphothreonine; by PKC. Topologically, residues 41–435 (LRRGLWATAV…EQKAAYEVSE (395 aa)) are extracellular. Intrachain disulfides connect Cys93-Cys187, Cys165-Cys172, Cys283-Cys372, Cys317-Cys368, Cys321-Cys366, Cys330-Cys352, and Cys332-Cys344. Residue Asn176 is glycosylated (N-linked (GlcNAc...) asparagine). The tract at residues 286-310 (ASLDPDDFDPEPSDPLGSPRPRPSP) is disordered. Asn400 is a glycosylation site (N-linked (GlcNAc...) asparagine). Residues 436-456 (LLGDIGGQMGLFIGASLLTIL) traverse the membrane as a helical segment. The short motif at 449 to 451 (GAS) is the GAS motif; ion selectivity filter element. The Cytoplasmic portion of the chain corresponds to 457–533 (EILDYLCEVF…HRTCYLVTRL (77 aa)). Ser523 is subject to Phosphoserine; by PKC. The PDZ-binding motif lies at 530–533 (VTRL).

The protein belongs to the amiloride-sensitive sodium channel (TC 1.A.6) family. ASIC3 subfamily. Can form homotrimeric channels. Heterotrimer; forms functional heterotrimers producing channel with different properties. Forms heterotrimers with ASIC2; gives rise to a biphasic current with a sustained current which discriminates poorly between Na(+) and K(+). Interacts with STOM; inhibits ASIC3 acid-evoked current. Interacts with LIN7B (via PDZ domain); increases ASIC3 expression at the plasma membrane. Interacts with MAGI1 (via PDZ domain); probably regulates ASIC3. Interacts with GOPC (via PDZ domain); probably regulates ASIC3. Interacts with DLG4 (via PDZ domain); reduces ASIC3 expression at the plasma membrane. In terms of processing, could be phosphorylated by PKC, promoting activation of ASIC2/ASIC3 heterotrimers. In terms of tissue distribution, expressed in sciatic nerve and dorsal root ganglion (at protein level). Expressed in sensory neurons of dorsal root ganglion. Expressed in Golgi interneurons in the granular layer. Also found in superior cervical ganglia, spinal cord and brain stem.

It is found in the cell membrane. The protein resides in the cytoplasm. It catalyses the reaction Na(+)(in) = Na(+)(out). The enzyme catalyses K(+)(in) = K(+)(out). The catalysed reaction is Ca(2+)(in) = Ca(2+)(out). With respect to regulation, inhibited by the diuretic drug amiloride. Inhibited by gadolinium ions. Inhibited by extracellular Ca(2+). Activated by lactate. Salicylic acid, diclofenac and aspirin inhibit the sustained current component. Activated by the vertebrate neuropeptides NPFF and NPSF, and the related FMRFamide. Specifically and reversibly inhibited by the a sea anemone toxin APETx2. ASIC3-containing channels are potentiated by the cono-RFamide CNF-Tx1.1, and probably CNF-Tx1.2 and CNF-Tx1.3 (AC P0DL71). Its function is as follows. Forms pH-gated heterotrimeric sodium channels that act as postsynaptic excitatory receptors in the nervous system. Upon extracellular acidification, these channels generate a biphasic current with a fast inactivating and a slow sustained phase. ASIC3 is more sensitive to protons and gates between closed, open, and desensitized states faster than other ASICs. Displays high selectivity for sodium ions but can also permit the permeation of other cations. As a neuronal acid sensor, probably contributes to mechanoreception, acid nociception, and heat nociception. By forming heterotrimeric channels with ASIC2, generates a biphasic current with a fast inactivating and a slow sustained phase, which in sensory neurons is proposed to mediate the pain induced by acidosis that occurs in ischemic, damaged or inflamed tissues. This Rattus norvegicus (Rat) protein is Acid-sensing ion channel 3.